A 167-amino-acid polypeptide reads, in one-letter code: uncharacterized protein (167 aa).

It localises to the mitochondrion. This is an uncharacterized protein from Ascobolus immersus.